A 173-amino-acid polypeptide reads, in one-letter code: Transcription factor E (173 aa).

One can recognise an HTH TFE/IIEalpha-type domain in the interval 9-92 (NNPATRAYIH…LWQLRIDLLY (84 aa)).

The protein belongs to the TFE family. As to quaternary structure, monomer. Interaction with RNA polymerase subunits RpoF and RpoE is necessary for Tfe stimulatory transcription activity. Able to interact with Tbp and RNA polymerase in the absence of DNA promoter. Interacts both with the preinitiation and elongation complexes.

Its function is as follows. Transcription factor that plays a role in the activation of archaeal genes transcribed by RNA polymerase. Facilitates transcription initiation by enhancing TATA-box recognition by TATA-box-binding protein (Tbp), and transcription factor B (Tfb) and RNA polymerase recruitment. Not absolutely required for transcription in vitro, but particularly important in cases where Tbp or Tfb function is not optimal. It dynamically alters the nucleic acid-binding properties of RNA polymerases by stabilizing the initiation complex and destabilizing elongation complexes. Seems to translocate with the RNA polymerase following initiation and acts by binding to the non template strand of the transcription bubble in elongation complexes. In Methanoregula boonei (strain DSM 21154 / JCM 14090 / 6A8), this protein is Transcription factor E.